We begin with the raw amino-acid sequence, 276 residues long: GPN-loop GTPase 3 (276 aa).

Position 13–18 (13–18) interacts with GTP; that stretch reads SSGKST. Residues 70–72 carry the Gly-Pro-Asn (GPN)-loop; involved in dimer interface motif; it reads GPN. GTP is bound at residue 173–176; that stretch reads SKMD. The disordered stretch occupies residues 257–276; that stretch reads EDQEPKDPDRFEADDLEDDE. The segment covering 259 to 269 has biased composition (basic and acidic residues); that stretch reads QEPKDPDRFEA.

This sequence belongs to the GPN-loop GTPase family. Heterodimers with gpn1 or gpn2. Binds to RNA polymerase II (RNAPII).

It is found in the cytoplasm. It localises to the nucleus. Functionally, small GTPase required for proper nuclear import of RNA polymerase II and III (RNAPII and RNAPIII). May act at an RNAP assembly step prior to nuclear import. The chain is GPN-loop GTPase 3 from Schizosaccharomyces pombe (strain 972 / ATCC 24843) (Fission yeast).